The following is a 154-amino-acid chain: Cyclin-dependent protein kinase inhibitor SMR14 (154 aa).

The tract at residues 1-111 (MSKIKIFHLF…RPPRKPKAIP (111 aa)) is disordered. The span at 24 to 37 (SLLVPSKSDSLDSS) shows a compositional bias: low complexity. Residues 74-83 (KWECKDEESP) show a composition bias toward basic and acidic residues.

Its function is as follows. Probable cyclin-dependent protein kinase (CDK) inhibitor that functions as a repressor of mitosis in the endoreduplication cell cycle. The chain is Cyclin-dependent protein kinase inhibitor SMR14 from Arabidopsis thaliana (Mouse-ear cress).